The chain runs to 506 residues: Parthenolide synthase (506 aa).

Residues 10-30 (LFLPTLCTILISYIIIKYVLI) traverse the membrane as a helical segment. Residues Asn-32, Asn-63, Asn-121, Asn-168, and Asn-175 are each glycosylated (N-linked (GlcNAc...) asparagine). A helical membrane pass occupies residues 301 to 321 (LLLNVLLGAIDTTFTTIVWAM). Cys-448 contacts heme.

The protein belongs to the cytochrome P450 family.

The protein resides in the membrane. The catalysed reaction is (+)-costunolide + reduced [NADPH--hemoprotein reductase] + O2 = parthenolide + oxidized [NADPH--hemoprotein reductase] + H2O + H(+). It functions in the pathway secondary metabolite biosynthesis; terpenoid biosynthesis. In terms of biological role, involved in the biosynthesis of germacrene-derived sesquiterpene lactones. Component of the parthenolide biosynthetic pathway; parthenolide and conjugates are promising anti-cancer drugs highly active against colon cancer cells. Catalyzes the conversion of costunolide to parthenolide. The chain is Parthenolide synthase from Tanacetum parthenium (Feverfew).